The primary structure comprises 300 residues: Erythroblast NAD(P)(+)--arginine ADP-ribosyltransferase (300 aa).

An N-terminal signal peptide occupies residues 1–22 (MEEPLLHAILGLVLLLSTRTDA). 2 disulfides stabilise this stretch: Cys51/Cys260 and Cys159/Cys208. The TR mART core domain occupies 70–256 (ETFAEGWRSA…IQLRSQGKSS (187 aa)). 3 residues coordinate NAD(+): Tyr107, Arg164, and Gln183. The active site involves Arg164. The active site involves Ser186. Residue Ser217 coordinates NAD(+). Glu224 is a catalytic residue. Residues 276-300 (SADKSSPLPRSPWPGWAPLAAPHSH) are disordered.

It belongs to the Arg-specific ADP-ribosyltransferase family.

It catalyses the reaction L-arginyl-[protein] + NAD(+) = N(omega)-(ADP-D-ribosyl)-L-arginyl-[protein] + nicotinamide + H(+). The protein is Erythroblast NAD(P)(+)--arginine ADP-ribosyltransferase (MADPRT) of Gallus gallus (Chicken).